The following is a 302-amino-acid chain: MSFTAYSDPCWPWSRGRPIARSARRHVAWVAGYLCVSRFGHDRCICRRGSFWPETRVQRVAGLQWSQLLLPVKCLNFWLYTLCYAAGMGSFFVFFSIAPGLMMGRPRCVSAWLQPAVRHSAIAMVFTARFMGSVIPKWGSPSVLRMGMGCLIAGAVLLAITEIWALHRVRLYCSNVASGIGVATAVSVPMALFEDSTMLLERSRQSTSAWACTARKHRNVDHFAVAAQRLGPCRVTVWTLATVVLGLSCVSRVKGSRGQGEHDAGRATNVGKYIKSQSLRECGKLSPNKCCSRPKTYAFRLG.

It localises to the cell membrane. Functionally, this protein is thought to be a membrane-associated barrier of drug uptake. The protein is Chloramphenicol resistance protein (cml) of Escherichia coli.